Consider the following 541-residue polypeptide: Valine N-monooxygenase 2 (541 aa).

The Cytoplasmic portion of the chain corresponds to 1–18 (MAMNVSTTATTTASFAST). The chain crosses the membrane as a helical span at residues 19 to 41 (SSMNNTAKILLITLFISIVSTVI). The Lumenal segment spans residues 42–541 (KLQKRASYKK…LAPHLYPTSP (500 aa)). Asn277 carries N-linked (GlcNAc...) asparagine glycosylation. Cys477 provides a ligand contact to heme. An N-linked (GlcNAc...) asparagine glycan is attached at Asn505.

Belongs to the cytochrome P450 family. Heme is required as a cofactor. Expressed in the epidermis, the next two cortex cell layers, the endodermis and the pericycle of leaf petioles. Strong expression around the laticifers among the phloem cells and in parenchymatic cells between the protoxylem and the metaxylem cells. In the leaves, preferentially expressed in the mesophyll cells adjacent to the epidermis.

Its subcellular location is the microsome membrane. It carries out the reaction L-valine + 2 reduced [NADPH--hemoprotein reductase] + 2 O2 = (E)-2-methylpropanal oxime + 2 oxidized [NADPH--hemoprotein reductase] + CO2 + 3 H2O + 2 H(+). It catalyses the reaction L-valine + reduced [NADPH--hemoprotein reductase] + O2 = N-hydroxy-L-valine + oxidized [NADPH--hemoprotein reductase] + H2O + 2 H(+). The enzyme catalyses N-hydroxy-L-valine + reduced [NADPH--hemoprotein reductase] + O2 = N,N-dihydroxy-L-valine + oxidized [NADPH--hemoprotein reductase] + H2O + H(+). The catalysed reaction is L-isoleucine + 2 reduced [NADPH--hemoprotein reductase] + 2 O2 = (1E,2S)-2-methylbutanal oxime + 2 oxidized [NADPH--hemoprotein reductase] + CO2 + 3 H2O + 2 H(+). It carries out the reaction L-isoleucine + reduced [NADPH--hemoprotein reductase] + O2 = N-hydroxy-L-isoleucine + oxidized [NADPH--hemoprotein reductase] + H2O + 2 H(+). It catalyses the reaction N-hydroxy-L-isoleucine + reduced [NADPH--hemoprotein reductase] + O2 = N,N-dihydroxy-L-isoleucine + oxidized [NADPH--hemoprotein reductase] + H2O + H(+). Functionally, involved in the biosynthesis of the cyanogenic glucosides linamarin and lotaustralin. Can use L-valine or L-isoleucine as substrate. Catalyzes multi-step reactions starting with two successive N-hydroxylations using L-valine and L-isoleucine as substrates leading to the formation of N,N-dihydroxy-L-valine and N,N-dihydroxy-L-isoleucine, respectively; following spontaneous reactions lead to the production of (E)-2-methylpropanal oxime and (1E,2S)-2-methylbutanal oxime, respectively. This chain is Valine N-monooxygenase 2, found in Manihot esculenta (Cassava).